We begin with the raw amino-acid sequence, 569 residues long: Probable protein phosphatase 2C BIPP2C1 (569 aa).

2 disordered regions span residues 166-212 (GSSN…SSKV) and 251-279 (SLDD…GSSI). The span at 174-183 (SEVGVESECG) shows a compositional bias: low complexity. The PPM-type phosphatase domain maps to 329–564 (AAMLPHPSKV…DDVTVVVSVV (236 aa)). Residues Asp-358, Gly-359, Asp-488, and Asp-555 each contribute to the Mn(2+) site.

Belongs to the PP2C family. The cofactor is Mg(2+). It depends on Mn(2+) as a cofactor.

It carries out the reaction O-phospho-L-seryl-[protein] + H2O = L-seryl-[protein] + phosphate. The enzyme catalyses O-phospho-L-threonyl-[protein] + H2O = L-threonyl-[protein] + phosphate. May play a role in responses to biotic and abiotic stresses. In Oryza sativa subsp. indica (Rice), this protein is Probable protein phosphatase 2C BIPP2C1 (BIPP2C1).